Reading from the N-terminus, the 456-residue chain is Protein king tubby (456 aa).

The segment at 111-202 is disordered; the sequence is HELEDEESSP…SNGAGGESEG (92 aa). Over residues 120–152 the composition is skewed to polar residues; that stretch reads PVTVIEQQQTAPHSANSTHSQRPSTTRQPSFND. Ser149 carries the phosphoserine modification.

Belongs to the TUB family.

The protein localises to the cytoplasm. The protein resides in the nucleus. It is found in the cell projection. It localises to the cilium membrane. Its subcellular location is the rhabdomere. The polypeptide is Protein king tubby (Drosophila pseudoobscura pseudoobscura (Fruit fly)).